The sequence spans 285 residues: MAKDIEAAAAHEGKDYSDPPPAPLVDAEELTKWSLYRAVIAEFVATLLFLYITVATVIGYKHQTDAAASGPDAACGGVGVLGIAWAFGGMIFILVYCTAGVSGGHINPAVTFGLFLARKVSLVRALLYIVAQCLGAICGVGLVKGFQSAFYVRYGGGANELSAGYSKGTGLAAEIIGTFVLVYTVFSATDPKRNARDSHVPVLAPLPIGFAVFMVHLATIPITGTGINPARSLGAAVIYNNDKAWDDHWIFWVGPFIGAAIAAAYHQYVLRASAAKLGSSASFSR.

A run of 2 helical transmembrane segments spans residues 38 to 58 (AVIA…ATVI) and 75 to 95 (CGGV…FILV). The NPA 1 motif lies at 107 to 109 (NPA). 3 consecutive transmembrane segments (helical) span residues 126–146 (LLYI…VKGF), 168–188 (GTGL…VFSA), and 202–222 (VLAP…TIPI). Residues 228–230 (NPA) carry the NPA 2 motif. A helical transmembrane segment spans residues 250–270 (IFWVGPFIGAAIAAAYHQYVL).

This sequence belongs to the MIP/aquaporin (TC 1.A.8) family. PIP (TC 1.A.8.11) subfamily. Homomers. May interact with PIP1-2 to form heteromers. As to expression, specifically expressed in roots, in the exodermis, endodermis and xylem parenchyma. Polar localization to the external periclinal side of epidermal cells in root apices.

The protein resides in the cell membrane. Water channel required to facilitate the transport of water across cell membrane. Its function is impaired by Hg(2+). May play a role in water uptake from the root surface. Active as homomers. Increased activity when heteromerization with PIP1-2. The chain is Aquaporin PIP2-5 (PIP2-5) from Zea mays (Maize).